Here is a 327-residue protein sequence, read N- to C-terminus: MKLNLASLCFLASIAPLVSGHYVFSKLIVDGKTTKDFEYIRENSNGYQPTLASEIVSNDFRCNKGSMESAAKTKVYTVAPGAEMGFQLAYGASMKHPGPLQIYMSKAPGDVKAYDGSGDWFKVYQEGVCNDISGGLKDTDWCTWGKDTASFKIPENTPPGQYLVRVEHIGLHRGFSGNSEFYFTCAQIEVTGSGSGVPGPLVKIPGVYKPEDPNIHFNIYHPVPTSYDLPGPSVWSGGVSDSSSSISAPPVNNAAAASSVTPTTLVTLSKTSSTPAATSSAAPTSSAPSNGTIKKYYQCGGQGWTGSGSCEAGTSCREWNTWYFQCV.

A signal peptide spans 1-20 (MKLNLASLCFLASIAPLVSG). 2 residues coordinate Cu(2+): His21 and His96. A disulfide bond links Cys62 and Cys185. His172 is an O2 binding site. Tyr182 contacts Cu(2+). Asn290 carries an N-linked (GlcNAc...) asparagine glycan. In terms of domain architecture, CBM1 spans 291–327 (GTIKKYYQCGGQGWTGSGSCEAGTSCREWNTWYFQCV).

Belongs to the polysaccharide monooxygenase AA9 family. Requires Cu(2+) as cofactor.

It is found in the secreted. It catalyses the reaction [(1-&gt;4)-beta-D-glucosyl]n+m + reduced acceptor + O2 = 4-dehydro-beta-D-glucosyl-[(1-&gt;4)-beta-D-glucosyl]n-1 + [(1-&gt;4)-beta-D-glucosyl]m + acceptor + H2O.. Functionally, lytic polysaccharide monooxygenase (LPMO) that depolymerizes crystalline and amorphous polysaccharides via the oxidation of scissile alpha- or beta-(1-4)-glycosidic bonds, yielding C1 or C4 oxidation products. Catalysis by LPMOs requires the reduction of the active-site copper from Cu(II) to Cu(I) by a reducing agent and H(2)O(2) or O(2) as a cosubstrate. The protein is AA9 family lytic polysaccharide monooxygenase G of Aspergillus tamarii.